The following is a 1048-amino-acid chain: FHIP family protein GJ17503 (1048 aa).

Residues 1-15 show a composition bias toward polar residues; sequence MSWLRTSPLRQSLTR. The disordered stretch occupies residues 1–32; the sequence is MSWLRTSPLRQSLTRNSGSSGSGNSSATTTLR. Over residues 16–26 the composition is skewed to low complexity; sequence NSGSSGSGNSS. Residue Ser-500 is modified to Phosphoserine. Disordered stretches follow at residues 652 to 675, 813 to 871, and 924 to 984; these read TTTATSDTDLEHNNSSSIGSGRRD, APMH…KRRS, and ARGA…ESGL. The segment covering 816–838 has biased composition (low complexity); it reads HQQHQQQQLQHTTNPTQQQQAQQ. Polar residues-rich tracts occupy residues 839-857 and 929-954; these read RSTYATLSAATPVQASPTS and QEQSRGNTCETSLSTAPRQEAQTAVV. Over residues 955-978 the composition is skewed to low complexity; sequence SSSNSSIGGSTQTLSATHSSSTLH.

Belongs to the FHIP family.

This Drosophila virilis (Fruit fly) protein is FHIP family protein GJ17503.